Here is a 1394-residue protein sequence, read N- to C-terminus: Kinesin-like protein KIF27 (1394 aa).

A Kinesin motor domain is found at 5 to 341; the sequence is PIKVAVRIRP…LKYANRARNI (337 aa). An ATP-binding site is contributed by 84–91; sequence GQTGSGKT. 2 coiled-coil regions span residues 352 to 418 and 498 to 554; these read QADR…IEQA and QKDL…ELAK. 2 disordered regions span residues 559 to 582 and 642 to 665; these read VPTS…RPHT and FSDN…RSHS. Residues 571–580 are compositionally biased toward basic and acidic residues; sequence PDARASEKRP. 5 positions are modified to phosphoserine: Ser643, Ser646, Ser672, Ser675, and Ser704. Coiled-coil stretches lie at residues 709–891, 921–1078, 1118–1152, and 1186–1226; these read LQKL…GQGE, LDEQ…SIQS, NKVI…HELE, and DQDG…RLKD. A disordered region spans residues 886 to 916; sequence KAGQGEGLNPKAEDQDGFNLNRRKSPFRSGD. Position 999 is a phosphoserine (Ser999). The segment covering 1267-1280 has biased composition (basic and acidic residues); the sequence is TENTKLNGSEREVD. 2 disordered regions span residues 1267-1319 and 1325-1344; these read TENT…LQSI and ARPF…PVRS. 2 stretches are compositionally biased toward polar residues: residues 1281–1295 and 1309–1319; these read NSSS…TQQI and IAPSSGQLQSI. Phosphoserine is present on residues Ser1365 and Ser1387.

This sequence belongs to the TRAFAC class myosin-kinesin ATPase superfamily. Kinesin family. KIF27 subfamily. As to quaternary structure, interacts with STK36.

The protein localises to the cytoplasm. It localises to the cytoskeleton. Its subcellular location is the cell projection. It is found in the cilium. Its function is as follows. Plays an essential role in motile ciliogenesis. The protein is Kinesin-like protein KIF27 (Kif27) of Mus musculus (Mouse).